Reading from the N-terminus, the 161-residue chain is Small ribosomal subunit protein uS19 (161 aa).

The span at 1 to 19 (MARQKKYSGKGGARKKNKQ) shows a compositional bias: basic residues. The segment at 1–26 (MARQKKYSGKGGARKKNKQKQNVAPR) is disordered.

The protein belongs to the universal ribosomal protein uS19 family.

Functionally, protein S19 forms a complex with S13 that binds strongly to the 16S ribosomal RNA. This chain is Small ribosomal subunit protein uS19, found in Methanococcus maripaludis (strain C5 / ATCC BAA-1333).